We begin with the raw amino-acid sequence, 318 residues long: NADH-ubiquinone oxidoreductase chain 1 (318 aa).

8 helical membrane passes run 2 to 22 (FMVNLLMLVIPVMLAMAFLTL), 71 to 91 (YIIAPTLALSIALIMWTPLPI), 98 to 118 (INLGVLFILATSSLAVYSILW), 146 to 166 (LAIILLCILLMSGSFTLSTLI), 171 to 191 (HTWLLLPSWPLAMMWFISTLA), 222 to 242 (LFFMAEYTNIIMMNALTATIF), 253 to 273 (EFFSINFTLKTLLLTTIFLWV), and 294 to 314 (LPLTLAMCMWHTALPIFLANI).

The protein belongs to the complex I subunit 1 family.

It is found in the mitochondrion inner membrane. It carries out the reaction a ubiquinone + NADH + 5 H(+)(in) = a ubiquinol + NAD(+) + 4 H(+)(out). In terms of biological role, core subunit of the mitochondrial membrane respiratory chain NADH dehydrogenase (Complex I) that is believed to belong to the minimal assembly required for catalysis. Complex I functions in the transfer of electrons from NADH to the respiratory chain. The immediate electron acceptor for the enzyme is believed to be ubiquinone. This Nycticebus coucang (Slow loris) protein is NADH-ubiquinone oxidoreductase chain 1 (MT-ND1).